Reading from the N-terminus, the 908-residue chain is DNA (cytosine-5)-methyltransferase 3A (908 aa).

The span at 1 to 13 (MPSSGPGDTSISS) shows a compositional bias: polar residues. Disordered stretches follow at residues 1-183 (MPSS…PMPR) and 226-281 (SQAS…PEYE). Positions 14 to 37 (LEREDDRKEGEEQEENRGKEERQE) are enriched in basic and acidic residues. Residues 44-54 (KVGRPGRKRKH) are compositionally biased toward basic residues. Over residues 69 to 80 (TTKSQPTAQDSG) the composition is skewed to polar residues. Serine 102 is modified (phosphoserine). Residues 110–124 (GAPAEGEGTETPPEA) show a composition bias toward low complexity. A Phosphothreonine modification is found at threonine 120. Lysine 158 participates in a covalent cross-link: Glycyl lysine isopeptide (Lys-Gly) (interchain with G-Cter in SUMO2). Arginine 167 bears the Omega-N-methylarginine mark. An interaction with DNMT1 and DNMT3B region spans residues 195–399 (SKRKRDEWLA…DTGKAVEVQN (205 aa)). A phosphoserine mark is found at serine 239 and serine 251. The segment covering 242–256 (AVQQPTDPASPTVAT) has biased composition (polar residues). At threonine 257 the chain carries Phosphothreonine. A PWWP domain is found at 257-315 (TPEPVGADAGDKNATKAADDEPEYEDGRGFGIGELVWGKLRGFSWWPGRIVSWWMTGRS). A compositionally biased stretch (basic and acidic residues) spans 265 to 275 (AGDKNATKAAD). A phosphoserine mark is found at serine 386 and serine 389. The interval 443–462 (AYAPPPPAKKPRKSTTEKPK) is disordered. The 133-residue stretch at 478 to 610 (EVRQKCRNIE…LQMFFANNHD (133 aa)) folds into the ADD domain. Residues 489-519 (ICISCGSLNVTLEHPLFIGGMCQNCKNCFLE) form a GATA-type; atypical zinc finger. An interaction with the PRC2/EED-EZH2 complex region spans residues 490–582 (CISCGSLNVT…KEDPWNCYMC (93 aa)). A PHD-type; atypical zinc finger spans residues 530 to 586 (QSYCTICCGGREVLMCGNNNCCRCFCVECVDLLVGPGAAQAAIKEDPWNCYMCGHKG). One can recognise an SAM-dependent MTase C5-type domain in the interval 630–908 (IRVLSLFDGI…APLKEYFACV (279 aa)). S-adenosyl-L-methionine is bound by residues 637–641 (DGIAT), glutamate 660, and 682–684 (DVR). Cysteine 706 is a catalytic residue. Residue cysteine 706 is modified to S-methylcysteine; by autocatalysis. 887–889 (RSW) is an S-adenosyl-L-methionine binding site.

Belongs to the class I-like SAM-binding methyltransferase superfamily. C5-methyltransferase family. As to quaternary structure, heterotetramer composed of 1 DNMT3A homodimer and 2 DNMT3L subunits (DNMT3L-DNMT3A-DNMT3A-DNMT3L). Interacts with DNMT1 and DNMT3B. Interacts with MPHOSPH8. Interacts with histone H3 that is not methylated at 'Lys-4' (H3K4). Binds the ZBTB18 transcriptional repressor. Interacts with SETDB1. Associates with HDAC1 through its ADD domain. Interacts with UHRF1. Interacts with the PRC2/EED-EZH2 complex. Interacts with UBC9, PIAS1 and PIAS2. Interacts with SPOCD1. Interacts with ZNF263; recruited to the SIX3 promoter along with other proteins involved in chromatin modification and transcriptional corepression where it contributes to transcriptional repression. Sumoylated; sumoylation disrupts the ability to interact with histone deacetylases (HDAC1 and HDAC2) and repress transcription. Post-translationally, auto-methylated at Cys-706: auto-methylation takes place in absence of DNA substrate and inactivates the DNA methyltransferase activity. Inactivation by auto-methylation may be used to inactivate unused DNA methyltransferases in the cell.

It is found in the nucleus. Its subcellular location is the chromosome. It localises to the cytoplasm. The catalysed reaction is a 2'-deoxycytidine in DNA + S-adenosyl-L-methionine = a 5-methyl-2'-deoxycytidine in DNA + S-adenosyl-L-homocysteine + H(+). The enzyme catalyses L-cysteinyl-[protein] + S-adenosyl-L-methionine = S-methyl-L-cysteinyl-[protein] + S-adenosyl-L-homocysteine + H(+). With respect to regulation, activated by binding to the regulatory factor DNMT3L. Auto-methylation at Cys-706 in absence of DNA inactivates the DNA methyltransferase activity. Functionally, required for genome-wide de novo methylation and is essential for the establishment of DNA methylation patterns during development. DNA methylation is coordinated with methylation of histones. It modifies DNA in a non-processive manner and also methylates non-CpG sites. May preferentially methylate DNA linker between 2 nucleosomal cores and is inhibited by histone H1. Plays a role in paternal and maternal imprinting. Required for methylation of most imprinted loci in germ cells. Acts as a transcriptional corepressor for ZBTB18. Recruited to trimethylated 'Lys-36' of histone H3 (H3K36me3) sites. Can actively repress transcription through the recruitment of HDAC activity. Also has weak auto-methylation activity on Cys-706 in absence of DNA. This chain is DNA (cytosine-5)-methyltransferase 3A (Dnmt3a), found in Rattus norvegicus (Rat).